A 316-amino-acid polypeptide reads, in one-letter code: DNA-directed RNA polymerase III subunit RPC6 (316 aa).

Residue A2 is modified to N-acetylalanine. Glycyl lysine isopeptide (Lys-Gly) (interchain with G-Cter in SUMO2) cross-links involve residues K5 and K7. The [4Fe-4S] cluster site is built by C287, C290, C296, and C307.

This sequence belongs to the eukaryotic RPC34/RPC39 RNA polymerase subunit family. As to quaternary structure, component of the RNA polymerase III complex consisting of 17 subunits: a ten-subunit horseshoe-shaped catalytic core composed of POLR3A/RPC1, POLR3B/RPC2, POLR1C/RPAC1, POLR1D/RPAC2, POLR3K/RPC10, POLR2E/RPABC1, POLR2F/RPABC2, POLR2H/RPABC3, POLR2K/RPABC4 and POLR2L/RPABC5; a mobile stalk composed of two subunits POLR3H/RPC8 and CRCP/RPC9, protruding from the core and functioning primarily in transcription initiation; and additional subunits homologous to general transcription factors of the RNA polymerase II machinery, POLR3C/RPC3-POLR3F/RPC6-POLR3G/RPC7 heterotrimer required for transcription initiation and POLR3D/RPC4-POLR3E/RPC5 heterodimer involved in both transcription initiation and termination. Directly interacts with POLR3C. Interacts with TBP and TFIIIB90 and GTF3C4. Interacts with MAF1. As part of the RNA polymerase III complex, interacts with PKP2.

It is found in the nucleus. Functionally, DNA-dependent RNA polymerase catalyzes the transcription of DNA into RNA using the four ribonucleoside triphosphates as substrates. Specific peripheric component of RNA polymerase III (Pol III) which synthesizes small non-coding RNAs including 5S rRNA, snRNAs, tRNAs and miRNAs from at least 500 distinct genomic loci. Part of POLR3C/RPC3-POLR3F/RPC6-POLR3G/RPC7 heterotrimer that coordinates the dynamics of Pol III stalk and clamp modules during the transition from apo to elongation state. Pol III plays a key role in sensing and limiting infection by intracellular bacteria and DNA viruses, including varicella zoster virus. Acts as a nuclear and cytosolic DNA sensor detecting AT-rich DNA, involved in innate immune response. Can sense non-self dsDNA that serves as template for transcription into dsRNA. The non-self RNA polymerase III transcripts, such as Epstein-Barr virus-encoded RNAs (EBERs) induce type I interferon and NF-kappa-B through the RIG-I pathway. Preferentially binds double-stranded DNA (dsDNA). The polypeptide is DNA-directed RNA polymerase III subunit RPC6 (POLR3F) (Bos taurus (Bovine)).